The primary structure comprises 176 residues: Ribosome maturation factor RimM (176 aa).

A PRC barrel domain is found at 99-174; it reads KDEFYVRDLI…IVLIQPELWN (76 aa).

Belongs to the RimM family. In terms of assembly, binds ribosomal protein uS19.

The protein localises to the cytoplasm. Functionally, an accessory protein needed during the final step in the assembly of 30S ribosomal subunit, possibly for assembly of the head region. Essential for efficient processing of 16S rRNA. May be needed both before and after RbfA during the maturation of 16S rRNA. It has affinity for free ribosomal 30S subunits but not for 70S ribosomes. This is Ribosome maturation factor RimM from Leptospira borgpetersenii serovar Hardjo-bovis (strain JB197).